A 210-amino-acid chain; its full sequence is Cytochrome c biogenesis ATP-binding export protein CcmA (210 aa).

One can recognise an ABC transporter domain in the interval 4 to 207; the sequence is LAVRDLAVAR…RQSRPAGFNE (204 aa). 36–43 is a binding site for ATP; it reads GPNGIGKT.

It belongs to the ABC transporter superfamily. CcmA exporter (TC 3.A.1.107) family. As to quaternary structure, the complex is composed of two ATP-binding proteins (CcmA) and two transmembrane proteins (CcmB).

It localises to the cell inner membrane. It catalyses the reaction heme b(in) + ATP + H2O = heme b(out) + ADP + phosphate + H(+). Functionally, part of the ABC transporter complex CcmAB involved in the biogenesis of c-type cytochromes; once thought to export heme, this seems not to be the case, but its exact role is uncertain. Responsible for energy coupling to the transport system. This chain is Cytochrome c biogenesis ATP-binding export protein CcmA, found in Paracoccus denitrificans (strain Pd 1222).